Here is a 407-residue protein sequence, read N- to C-terminus: Imidazolonepropionase (407 aa).

Residues His-73 and His-75 each contribute to the Fe(3+) site. The Zn(2+) site is built by His-73 and His-75. 3 residues coordinate 4-imidazolone-5-propanoate: Arg-82, Tyr-145, and His-178. Residue Tyr-145 coordinates N-formimidoyl-L-glutamate. His-243 serves as a coordination point for Fe(3+). His-243 is a Zn(2+) binding site. Gln-246 serves as a coordination point for 4-imidazolone-5-propanoate. Position 318 (Asp-318) interacts with Fe(3+). Asp-318 provides a ligand contact to Zn(2+). The N-formimidoyl-L-glutamate site is built by Asn-320 and Gly-322. 4-imidazolone-5-propanoate is bound at residue Thr-323.

This sequence belongs to the metallo-dependent hydrolases superfamily. HutI family. Requires Zn(2+) as cofactor. It depends on Fe(3+) as a cofactor.

The protein resides in the cytoplasm. The catalysed reaction is 4-imidazolone-5-propanoate + H2O = N-formimidoyl-L-glutamate. The protein operates within amino-acid degradation; L-histidine degradation into L-glutamate; N-formimidoyl-L-glutamate from L-histidine: step 3/3. Functionally, catalyzes the hydrolytic cleavage of the carbon-nitrogen bond in imidazolone-5-propanoate to yield N-formimidoyl-L-glutamate. It is the third step in the universal histidine degradation pathway. This is Imidazolonepropionase from Serratia proteamaculans (strain 568).